We begin with the raw amino-acid sequence, 342 residues long: 6-hydroxytryprostatin B O-methyltransferase (342 aa).

Asp-201 lines the S-adenosyl-L-methionine pocket. The Proton acceptor role is filled by His-244.

It belongs to the class I-like SAM-binding methyltransferase superfamily. Cation-independent O-methyltransferase family. Homodimer.

It carries out the reaction 6-hydroxytryprostatin B + S-adenosyl-L-methionine = tryprostatin A + S-adenosyl-L-homocysteine + H(+). It participates in alkaloid biosynthesis. 6-hydroxytryprostatin B O-methyltransferase; part of the gene cluster that mediates the biosynthesis of fumitremorgins, indole alkaloids that carry not only intriguing chemical structures, but also interesting biological and pharmacological activities. The biosynthesis of fumitremorgin-type alkaloids begins by condensation of the two amino acids L-tryptophan and L-proline to brevianamide F, catalyzed by the non-ribosomal peptide synthetase ftmA. Brevianamide F is then prenylated by the prenyltransferase ftmPT1/ftmB in the presence of dimethylallyl diphosphate, resulting in the formation of tryprostatin B. The three cytochrome P450 monooxygenases, ftmP450-1/ftmC, ftmP450-2/ftmE and ftmP450-3/FtmG, are responsible for the conversion of tryprostatin B to 6-hydroxytryprostatin B, tryprostatin A to fumitremorgin C and fumitremorgin C to 12,13-dihydroxyfumitremorgin C, respectively. The putative methyltransferase ftmMT/ftmD is expected for the conversion of 6-hydroxytryprostatin B to tryprostatin A. FtmPT2/FtmH catalyzes the prenylation of 12,13-dihydroxyfumitre-morgin C in the presence of dimethylallyl diphosphate, resulting in the formation of fumitremorgin B. Fumitremorgin B is further converted to verruculogen by ftmOx1/ftmF via the insertion of an endoperoxide bond between the two prenyl moieties. In some fungal species, verruculogen is further converted to fumitremorgin A, but the enzymes involved in this step have not been identified yet. The protein is 6-hydroxytryprostatin B O-methyltransferase of Aspergillus fumigatus (Neosartorya fumigata).